A 220-amino-acid polypeptide reads, in one-letter code: 1-Cys peroxiredoxin B (220 aa).

Residues 4–165 enclose the Thioredoxin domain; sequence LTLGDVVPDL…VLRATDALLT (162 aa). The active-site Cysteine sulfenic acid (-SOH) intermediate is Cys46. The Bipartite nuclear localization signal signature appears at 195 to 218; the sequence is KARFPAGFETAQLPSNKCYLRFTQ.

Belongs to the peroxiredoxin family. Prx6 subfamily.

It is found in the nucleus. Its subcellular location is the cytoplasm. It carries out the reaction a hydroperoxide + [thioredoxin]-dithiol = an alcohol + [thioredoxin]-disulfide + H2O. Functionally, thiol-specific peroxidase that catalyzes the reduction of hydrogen peroxide and organic hydroperoxides to water and alcohols, respectively. Seems to contribute to the inhibition of germination during stress. This is 1-Cys peroxiredoxin B from Oryza sativa subsp. indica (Rice).